Here is a 655-residue protein sequence, read N- to C-terminus: Putative esterase (655 aa).

A helical membrane pass occupies residues 9–29; that stretch reads VLSLTLIYISISIGFSVYFYV. N-linked (GlcNAc...) asparagine; by host glycosylation is found at Asn-71, Asn-89, Asn-101, Asn-185, Asn-386, Asn-449, and Asn-512. The Charge relay system role is filled by His-515. 2 N-linked (GlcNAc...) asparagine; by host glycosylation sites follow: Asn-527 and Asn-597.

It belongs to the type-B carboxylesterase/lipase family.

Its subcellular location is the membrane. The enzyme catalyses a carboxylic ester + H2O = an alcohol + a carboxylate + H(+). This is Putative esterase from Noctuidae (owlet moths).